Consider the following 81-residue polypeptide: Sec-independent protein translocase protein TatA (81 aa).

Residues 1–21 (MGGISVWQLLIIAVIVVLLFG) traverse the membrane as a helical segment. Residues 42–81 (AMSDEDSAKNEKDADFEPKSLEKQQQKEAAPETKKDKEQA) are disordered.

It belongs to the TatA/E family. In terms of assembly, the Tat system comprises two distinct complexes: a TatABC complex, containing multiple copies of TatA, TatB and TatC subunits, and a separate TatA complex, containing only TatA subunits. Substrates initially bind to the TatABC complex, which probably triggers association of the separate TatA complex to form the active translocon.

The protein localises to the cell inner membrane. Part of the twin-arginine translocation (Tat) system that transports large folded proteins containing a characteristic twin-arginine motif in their signal peptide across membranes. TatA could form the protein-conducting channel of the Tat system. The sequence is that of Sec-independent protein translocase protein TatA from Vibrio parahaemolyticus serotype O3:K6 (strain RIMD 2210633).